The following is a 183-amino-acid chain: Ribosome-recycling factor (183 aa).

This sequence belongs to the RRF family.

Its subcellular location is the cytoplasm. Responsible for the release of ribosomes from messenger RNA at the termination of protein biosynthesis. May increase the efficiency of translation by recycling ribosomes from one round of translation to another. In Buchnera aphidicola subsp. Baizongia pistaciae (strain Bp), this protein is Ribosome-recycling factor.